A 280-amino-acid polypeptide reads, in one-letter code: MTFTKQPPAVHDTDISFPQPHVLVVTLNRPKAFNAIPRPLHPQLAALWAWYDAEPSLRCAVLTGAGKAFCAGADLKEWNDKAAAGQAIGAAGERDPSWATSGFGGLSNRRGKKPVIAAVNGLCLGGGMEMALAADMIVAAAAARFGLPEVKIGVVAVAGALPRLTRIVGRQRASEMALLGRTYAAEEMRSWGVVNHIVPEGGSVVDEALRWAGELAGNSPDSVIVTRAGLLGGWDPVDPVKSTQEIDEGIYKLLEAGENQKEGVKSFVEKRRPVWKDSKL.

Positions 278-280 (SKL) match the PTS1-type peroxisomal targeting signal motif.

Belongs to the enoyl-CoA hydratase/isomerase family.

The protein localises to the peroxisome. Its pathway is siderophore biosynthesis. Functionally, mevalonyl-coenzyme A hydratase; part of the gene cluster that mediates the biosynthesis of at least 11 siderophores, including beauverichelin A, dimerumic acid (DA), Na-dimethyl coprogen (NADC), eleutherazine B, ferricrocin (FC), fusarinine A, fusarinine C (FsC), metachelin A, mevalonolactone, rhodotorulic acid (RA) and tenellin. This cocktail of siderophores for iron metabolism is essential for virulence, and more specifically for the fungal virulence in penetrating through the host cuticle. Siderophore synthesis is also involved in conidial germination under iron-deficient conditions. For biosynthesis of fusarinine C, the transacylase SIDF transfers anhydromevalonyl to N(5)-hydroxyornithine. The required anhydromevalonyl-CoA moiety is derived from mevalonate by CoA ligation and dehydration catalyzed by SIDI and sidH respectively. SIDH is not essential for siderophore production, probably due to functional redundancy of this protein family, as there are 15 homologs of SIDH in B.bassiana. The chain is Mevalonyl-coenzyme A hydratase SIDH from Beauveria bassiana (strain ARSEF 2860) (White muscardine disease fungus).